The chain runs to 231 residues: NADH-ubiquinone oxidoreductase chain 4 (231 aa).

6 consecutive transmembrane segments (helical) span residues 1–21, 34–54, 63–85, 89–111, 128–148, and 169–189; these read PIAG…YGII, MFIP…LTCL, IAYS…TPWG, AMAL…NTTY, ILPM…AMPP, and TIIM…HMFL.

Belongs to the complex I subunit 4 family.

It is found in the mitochondrion membrane. The catalysed reaction is a ubiquinone + NADH + 5 H(+)(in) = a ubiquinol + NAD(+) + 4 H(+)(out). Functionally, core subunit of the mitochondrial membrane respiratory chain NADH dehydrogenase (Complex I) that is believed to belong to the minimal assembly required for catalysis. Complex I functions in the transfer of electrons from NADH to the respiratory chain. The immediate electron acceptor for the enzyme is believed to be ubiquinone. In Lachesis muta muta (Bushmaster), this protein is NADH-ubiquinone oxidoreductase chain 4 (MT-ND4).